Here is a 116-residue protein sequence, read N- to C-terminus: Large ribosomal subunit protein bL17 (116 aa).

This sequence belongs to the bacterial ribosomal protein bL17 family. Part of the 50S ribosomal subunit. Contacts protein L32.

The chain is Large ribosomal subunit protein bL17 from Dictyoglomus turgidum (strain DSM 6724 / Z-1310).